Consider the following 937-residue polypeptide: Leucine--tRNA ligase (937 aa).

The 'HIGH' region motif lies at 34-44 (PYPSGAMHIGH). The 'KMSKS' region signature appears at 609–613 (KMSSS).

This sequence belongs to the class-I aminoacyl-tRNA synthetase family.

The protein resides in the cytoplasm. It carries out the reaction tRNA(Leu) + L-leucine + ATP = L-leucyl-tRNA(Leu) + AMP + diphosphate. This Methanothermobacter thermautotrophicus (strain ATCC 29096 / DSM 1053 / JCM 10044 / NBRC 100330 / Delta H) (Methanobacterium thermoautotrophicum) protein is Leucine--tRNA ligase.